The chain runs to 120 residues: NAD(P)H-quinone oxidoreductase subunit 3 (120 aa).

3 consecutive transmembrane segments (helical) span residues 6–26, 64–84, and 89–109; these read GYDA…LALV, MFAL…PWAV, and LGLL…VALA.

The protein belongs to the complex I subunit 3 family. In terms of assembly, NDH-1 can be composed of about 15 different subunits; different subcomplexes with different compositions have been identified which probably have different functions.

It localises to the cellular thylakoid membrane. The enzyme catalyses a plastoquinone + NADH + (n+1) H(+)(in) = a plastoquinol + NAD(+) + n H(+)(out). It carries out the reaction a plastoquinone + NADPH + (n+1) H(+)(in) = a plastoquinol + NADP(+) + n H(+)(out). Functionally, NDH-1 shuttles electrons from an unknown electron donor, via FMN and iron-sulfur (Fe-S) centers, to quinones in the respiratory and/or the photosynthetic chain. The immediate electron acceptor for the enzyme in this species is believed to be plastoquinone. Couples the redox reaction to proton translocation, and thus conserves the redox energy in a proton gradient. Cyanobacterial NDH-1 also plays a role in inorganic carbon-concentration. This chain is NAD(P)H-quinone oxidoreductase subunit 3, found in Synechococcus sp. (strain WH7803).